Reading from the N-terminus, the 293-residue chain is DNA-directed RNA polymerase III subunit RPC6 (293 aa).

Belongs to the eukaryotic RPC34/RPC39 RNA polymerase subunit family. As to quaternary structure, component of the RNA polymerase III (Pol III) complex consisting of 17 subunits.

It is found in the nucleus. Its function is as follows. DNA-dependent RNA polymerase catalyzes the transcription of DNA into RNA using the four ribonucleoside triphosphates as substrates. Specific peripheric component of RNA polymerase III which synthesizes small RNAs, such as 5S rRNA and tRNAs. This is DNA-directed RNA polymerase III subunit RPC6 from Drosophila melanogaster (Fruit fly).